We begin with the raw amino-acid sequence, 355 residues long: Syntaxin-5 (355 aa).

Residues 1–333 (MIPRKRYGSK…KYFQSVTSNR (333 aa)) lie on the Cytoplasmic side of the membrane. The short motif at 245–247 (IDM) is the IxM motif; signal for cargo packaging into COPII-coated vesicles element. The t-SNARE coiled-coil homology domain occupies 263-325 (DSYIQSRADT…EAAHSEILKY (63 aa)). Residues 287-318 (FQQLAHMVKEQEETIQRIDENVLGAQLDVEAA) adopt a coiled-coil conformation. A helical; Anchor for type IV membrane protein transmembrane segment spans residues 334 to 354 (WLMVKIFLILIVFFIIFVVFL). A topological domain (vesicular) is located at residue alanine 355.

It belongs to the syntaxin family. In terms of assembly, part of a ternary complex containing STX5A, NSFL1C and VCP. Part of a unique SNARE complex composed of the Golgi SNAREs GOSR1, GOSR2 and YKT6. This complex also includes VTI1A. Component of a SNARE complex consisting of STX5, YKT6, GOSR1 and BET1L. Interacts with BET1L. Interacts with BET1. Interacts with COG4. Interacts with GM130/GOLGA2. Interacts (via IxM motif) with SEC24C and SEC24D; mediates STX5 packaging into COPII-coated vesicles. Interacts with VLDLR; this interaction mediates VLDLR translocation from the endoplasmic reticulum to the plasma membrane. Expressed in the brain, heart, spleen, lung, liver, kidney and testis.

It localises to the endoplasmic reticulum-Golgi intermediate compartment membrane. It is found in the golgi apparatus membrane. Mediates endoplasmic reticulum to Golgi transport. Together with p115/USO1 and GM130/GOLGA2, involved in vesicle tethering and fusion at the cis-Golgi membrane to maintain the stacked and inter-connected structure of the Golgi apparatus. In terms of biological role, required for Golgi to endoplasmic reticulum retrogade transport, and for intra-Golgi transport. The polypeptide is Syntaxin-5 (Stx5) (Rattus norvegicus (Rat)).